The following is a 493-amino-acid chain: Dipeptide permease D (493 aa).

13 helical membrane passes run 14-34 (VVAL…LLIL), 49-69 (ELFS…GYLA), 91-111 (LVLG…AIIV), 138-158 (GGFS…PIAC), 167-187 (WAMG…IFLC), 212-232 (NWGW…VLFW), 235-255 (WSVY…AKIY), 267-287 (LGLI…AQQG), 312-332 (MFQS…AWLV), 344-364 (IWGK…ILTL), 379-399 (LMVL…PVAM), 413-433 (VLTG…AGVI), and 458-478 (VFEQ…LIWL).

The protein belongs to the major facilitator superfamily. Proton-dependent oligopeptide transporter (POT/PTR) (TC 2.A.17) family. DtpD subfamily.

It is found in the cell inner membrane. In terms of biological role, probable proton-dependent permease that transports dipeptides. The sequence is that of Dipeptide permease D from Salmonella paratyphi C (strain RKS4594).